A 293-amino-acid polypeptide reads, in one-letter code: Cell adhesion molecule CEACAM21 (293 aa).

An N-terminal signal peptide occupies residues 1–34 (MGPPSACPHRECIPWQGLLLTASLLTFWNAPTTA). The Extracellular portion of the chain corresponds to 35 to 240 (WLFIASAPFE…TVKSDDNTLG (206 aa)). Asn111 is a glycosylation site (N-linked (GlcNAc...) asparagine). The Ig-like C2-type domain maps to 147–231 (PSIQASSTTV…SNRSDPLKLT (85 aa)). Cys166 and Cys214 form a disulfide bridge. A helical transmembrane segment spans residues 241 to 261 (ILIGVLVGSLLVAALVCFLLL). At 262–293 (RKTGRASDQSDFREQQPPASTPGHGPSDSSIS) the chain is on the cytoplasmic side. The disordered stretch occupies residues 267-293 (ASDQSDFREQQPPASTPGHGPSDSSIS).

Belongs to the immunoglobulin superfamily. CEA family.

It localises to the membrane. The polypeptide is Cell adhesion molecule CEACAM21 (Homo sapiens (Human)).